The chain runs to 21 residues: Helicopsin (21 aa).

It belongs to the CRISP family. Contains 8 disulfide bonds. In terms of tissue distribution, expressed by the salivary gland.

The protein localises to the secreted. Its function is as follows. Helicopsin exhibits robust neurotoxic activity as shown by immediate death (about 8 minutes) of mice due to respiratory paralysis. The polypeptide is Helicopsin (Helicops angulatus (South American water snake)).